A 164-amino-acid polypeptide reads, in one-letter code: Mediator of RNA polymerase II transcription subunit 21 (164 aa).

A disordered region spans residues 49-81; the sequence is APLPANQTQQGSTLGSNRQTVSPSTQAEAESNF. The segment covering 53–81 has biased composition (polar residues); that stretch reads ANQTQQGSTLGSNRQTVSPSTQAEAESNF. Residues 114–146 adopt a coiled-coil conformation; that stretch reads ESQLKIIDDLSKELQSVEQEQVKKIQEKDKLLK.

This sequence belongs to the Mediator complex subunit 21 family. Component of the Mediator complex.

It localises to the nucleus. Functionally, component of the Mediator complex, a coactivator involved in the regulated transcription of nearly all RNA polymerase II-dependent genes. Mediator functions as a bridge to convey information from gene-specific regulatory proteins to the basal RNA polymerase II transcription machinery. Mediator is recruited to promoters by direct interactions with regulatory proteins and serves as a scaffold for the assembly of a functional preinitiation complex with RNA polymerase II and the general transcription factors. The protein is Mediator of RNA polymerase II transcription subunit 21 (SRB7) of Scheffersomyces stipitis (strain ATCC 58785 / CBS 6054 / NBRC 10063 / NRRL Y-11545) (Yeast).